The sequence spans 907 residues: Translation initiation factor IF-2 (907 aa).

3 stretches are compositionally biased toward basic and acidic residues: residues 223 to 235 (LAQRRQEEAKRAA), 251 to 263 (VAKEAPKPEEKNA), and 270 to 281 (GGKDWNDSDGKK). Positions 223–320 (LAQRRQEEAK…ENQQHAFTAP (98 aa)) are disordered. Positions 407–576 (PRPPVVTVMG…LLQAEVLELK (170 aa)) constitute a tr-type G domain. A G1 region spans residues 416–423 (GHVDHGKT). 416 to 423 (GHVDHGKT) is a GTP binding site. The segment at 441 to 445 (GITQH) is G2. Residues 462 to 465 (DTPG) are G3. Residues 462-466 (DTPGH) and 516-519 (NKID) contribute to the GTP site. The G4 stretch occupies residues 516-519 (NKID). A G5 region spans residues 552–554 (SAK).

This sequence belongs to the TRAFAC class translation factor GTPase superfamily. Classic translation factor GTPase family. IF-2 subfamily.

It is found in the cytoplasm. Its function is as follows. One of the essential components for the initiation of protein synthesis. Protects formylmethionyl-tRNA from spontaneous hydrolysis and promotes its binding to the 30S ribosomal subunits. Also involved in the hydrolysis of GTP during the formation of the 70S ribosomal complex. The polypeptide is Translation initiation factor IF-2 (Methylobacillus flagellatus (strain ATCC 51484 / DSM 6875 / VKM B-1610 / KT)).